A 322-amino-acid chain; its full sequence is HPr kinase/phosphorylase (322 aa).

Catalysis depends on residues histidine 142 and lysine 163. Position 157-164 (157-164 (GASGVGKS)) interacts with ATP. Serine 164 provides a ligand contact to Mg(2+). Catalysis depends on aspartate 181, which acts as the Proton acceptor; for phosphorylation activity. Proton donor; for dephosphorylation activity. Positions 205 to 214 (MEIRGIGIID) are important for the catalytic mechanism of both phosphorylation and dephosphorylation. Glutamate 206 serves as a coordination point for Mg(2+). Arginine 247 is an active-site residue. Residues 268–273 (PVKVGR) are important for the catalytic mechanism of dephosphorylation.

The protein belongs to the HPrK/P family. As to quaternary structure, homohexamer. It depends on Mg(2+) as a cofactor.

The catalysed reaction is [HPr protein]-L-serine + ATP = [HPr protein]-O-phospho-L-serine + ADP + H(+). It carries out the reaction [HPr protein]-O-phospho-L-serine + phosphate + H(+) = [HPr protein]-L-serine + diphosphate. Its function is as follows. Catalyzes the ATP- as well as the pyrophosphate-dependent phosphorylation of a specific serine residue in HPr, a phosphocarrier protein of the phosphoenolpyruvate-dependent sugar phosphotransferase system (PTS). HprK/P also catalyzes the pyrophosphate-producing, inorganic phosphate-dependent dephosphorylation (phosphorolysis) of seryl-phosphorylated HPr (P-Ser-HPr). The two antagonistic activities of HprK/P are regulated by several intracellular metabolites, which change their concentration in response to the absence or presence of rapidly metabolisable carbon sources (glucose, fructose, etc.) in the growth medium. Therefore, by controlling the phosphorylation state of HPr, HPrK/P is a sensor enzyme that plays a major role in the regulation of carbon metabolism and sugar transport: it mediates carbon catabolite repression (CCR), and regulates PTS-catalyzed carbohydrate uptake and inducer exclusion. This Lactobacillus acidophilus (strain ATCC 700396 / NCK56 / N2 / NCFM) protein is HPr kinase/phosphorylase.